The chain runs to 240 residues: Ribose-5-phosphate isomerase A (240 aa).

The interval 1–23 (MKTSGGSDAAKRRAGESAAETVT) is disordered. Substrate contacts are provided by residues 32 to 35 (TGST), 92 to 95 (DGAD), and 111 to 114 (KGGG). E120 functions as the Proton acceptor in the catalytic mechanism. K138 provides a ligand contact to substrate.

This sequence belongs to the ribose 5-phosphate isomerase family. As to quaternary structure, homodimer.

It catalyses the reaction aldehydo-D-ribose 5-phosphate = D-ribulose 5-phosphate. Its pathway is carbohydrate degradation; pentose phosphate pathway; D-ribose 5-phosphate from D-ribulose 5-phosphate (non-oxidative stage): step 1/1. Its function is as follows. Catalyzes the reversible conversion of ribose-5-phosphate to ribulose 5-phosphate. This chain is Ribose-5-phosphate isomerase A, found in Halorubrum lacusprofundi (strain ATCC 49239 / DSM 5036 / JCM 8891 / ACAM 34).